Consider the following 553-residue polypeptide: HTH-type transcriptional regulator SgrR (553 aa).

The HTH marR-type domain occupies 1-113 (MSTSRLQQQF…RQMLLSQLGR (113 aa)). The H-T-H motif DNA-binding region spans 26–49 (LQALAEVLNCSRRHVRSLLGKMQH). A solute-binding region spans residues 163–494 (ELEPDLSHHW…EELHQDIESW (332 aa)).

Its function is as follows. Activates the small RNA gene sgrS under glucose-phosphate stress conditions as well as yfdZ. Represses its own transcription under both stress and non-stress conditions. Might act as a sensor of the intracellular accumulation of phosphoglucose by binding these molecules in its C-terminal solute-binding domain. This chain is HTH-type transcriptional regulator SgrR, found in Yersinia pseudotuberculosis serotype I (strain IP32953).